Reading from the N-terminus, the 497-residue chain is Apolipoprotein N-acyltransferase (497 aa).

6 helical membrane passes run 21 to 41 (FAPF…ALLW), 51 to 71 (ALTG…WLYV), 85 to 105 (VLAL…TGWI), 119 to 139 (GMVA…FTGF), 157 to 177 (FAPV…AAWL), and 189 to 209 (FWLG…IHWT). One can recognise a CN hydrolase domain in the interval 221–461 (LQGNIPQNMK…GLHSTAQGFG (241 aa)). Catalysis depends on Glu-259, which acts as the Proton acceptor. Lys-319 is a catalytic residue. Cys-371 acts as the Nucleophile in catalysis. A helical membrane pass occupies residues 472–492 (SLVFALIGLLLLAGSLAAFSG).

Belongs to the CN hydrolase family. Apolipoprotein N-acyltransferase subfamily.

It localises to the cell inner membrane. It carries out the reaction N-terminal S-1,2-diacyl-sn-glyceryl-L-cysteinyl-[lipoprotein] + a glycerophospholipid = N-acyl-S-1,2-diacyl-sn-glyceryl-L-cysteinyl-[lipoprotein] + a 2-acyl-sn-glycero-3-phospholipid + H(+). It participates in protein modification; lipoprotein biosynthesis (N-acyl transfer). Catalyzes the phospholipid dependent N-acylation of the N-terminal cysteine of apolipoprotein, the last step in lipoprotein maturation. The polypeptide is Apolipoprotein N-acyltransferase (Nitrosomonas europaea (strain ATCC 19718 / CIP 103999 / KCTC 2705 / NBRC 14298)).